Reading from the N-terminus, the 364-residue chain is Putative F-box/kelch-repeat protein At1g12170 (364 aa).

The 50-residue stretch at 1-50 folds into the F-box domain; it reads MMHVILPWELVEEILYRVPPLSLTRFKIVCKQWNTLFKSKSFVNNHLVRV. 2 Kelch repeats span residues 156 to 205 and 328 to 364; these read SIYN…LNGN and CVYI…IPVP.

This is Putative F-box/kelch-repeat protein At1g12170 from Arabidopsis thaliana (Mouse-ear cress).